Consider the following 318-residue polypeptide: Probable cell division protein WhiA (318 aa).

Residues 281–314 (SLKELGQMLVPPVGKSGVNHRLRKIEEISKKLKE) constitute a DNA-binding region (H-T-H motif).

Belongs to the WhiA family.

Functionally, involved in cell division and chromosome segregation. The protein is Probable cell division protein WhiA of Thermoanaerobacter sp. (strain X514).